Reading from the N-terminus, the 241-residue chain is C-type lectin domain family 9 member A (241 aa).

At 1–34 the chain is on the cytoplasmic side; it reads MHEEEIYTSLQWDIPTSEASQKCPSLSKCPGTWC. The short motif at 5 to 10 is the ITAM-like element; it reads EIYTSL. Residues 35–55 form a helical; Signal-anchor for type II membrane protein membrane-spanning segment; sequence IVTVISCVVCVGLLAASIFLG. Residues 56 to 241 lie on the Extracellular side of the membrane; sequence IKFSQVSSLV…CEKKAFGSCI (186 aa). 2 N-linked (GlcNAc...) asparagine glycosylation sites follow: N81 and N88. C113 and C124 are oxidised to a cystine. The 114-residue stretch at 120–233 folds into the C-type lectin domain; it reads NGKSCYYAFD…CSNWKYFICE (114 aa). N135, N161, and N223 each carry an N-linked (GlcNAc...) asparagine glycan. Cystine bridges form between C141–C232 and C211–C224.

As to quaternary structure, homodimer. Post-translationally, N-glycosylated. As to expression, high expression in the spleen, moderate to low levels in several other tissues and cell types, but no detectable expression in skin dendritic cells or CD4(+) T-cells.

The protein localises to the membrane. Its function is as follows. Functions as an endocytic receptor on a small subset of myeloid cells specialized for the uptake and processing of material from dead cells. Recognizes filamentous form of actin in association with particular actin-binding domains of cytoskeletal proteins, including spectrin, exposed when cell membranes are damaged, and mediate the cross-presentation of dead-cell associated antigens in a Syk-dependent manner. The chain is C-type lectin domain family 9 member A (Clec9a) from Rattus norvegicus (Rat).